The primary structure comprises 208 residues: 28 kDa heat- and acid-stable phosphoprotein homolog (208 aa).

2 disordered regions span residues 1 to 133 and 145 to 208; these read MAGG…VTKK and LSRR…LGLA. The span at 16–44 shows a compositional bias: basic and acidic residues; the sequence is FGRDYERSKGKISRDRVYDEEDIIKRNQE. 2 stretches are compositionally biased toward low complexity: residues 52–69 and 84–100; these read GSESGSENETKNNNNKSK and RNPNAKKPAAKRPPTTK. Residues 105-121 are compositionally biased toward acidic residues; sequence SDSEDDSDKESDSEDEI. Positions 137–206 form a coiled coil; it reads INVNAKVELS…EKMAERRRLG (70 aa). 2 stretches are compositionally biased toward basic and acidic residues: residues 145-154 and 162-208; these read LSRREKEELA and QNEK…LGLA.

Belongs to the PDAP1 family.

The polypeptide is 28 kDa heat- and acid-stable phosphoprotein homolog (Dictyostelium discoideum (Social amoeba)).